Consider the following 601-residue polypeptide: Elongation factor 4 (601 aa).

One can recognise a tr-type G domain in the interval 5 to 187 (EHIRNFSIIA…AIVERLPAPE (183 aa)). Residues 17–22 (DHGKST) and 134–137 (NKVD) each bind GTP.

The protein belongs to the TRAFAC class translation factor GTPase superfamily. Classic translation factor GTPase family. LepA subfamily.

It localises to the cell inner membrane. The catalysed reaction is GTP + H2O = GDP + phosphate + H(+). In terms of biological role, required for accurate and efficient protein synthesis under certain stress conditions. May act as a fidelity factor of the translation reaction, by catalyzing a one-codon backward translocation of tRNAs on improperly translocated ribosomes. Back-translocation proceeds from a post-translocation (POST) complex to a pre-translocation (PRE) complex, thus giving elongation factor G a second chance to translocate the tRNAs correctly. Binds to ribosomes in a GTP-dependent manner. In Nitratidesulfovibrio vulgaris (strain DSM 19637 / Miyazaki F) (Desulfovibrio vulgaris), this protein is Elongation factor 4.